Reading from the N-terminus, the 307-residue chain is Recombination-associated protein RdgC (307 aa).

It belongs to the RdgC family.

The protein localises to the cytoplasm. It is found in the nucleoid. Its function is as follows. May be involved in recombination. This Colwellia psychrerythraea (strain 34H / ATCC BAA-681) (Vibrio psychroerythus) protein is Recombination-associated protein RdgC.